A 137-amino-acid chain; its full sequence is Large ribosomal subunit protein eL32 (137 aa).

The tract at residues 95–137 (PSAAEIATPVSSRKRIASSPARQADRCSRSRRSKFRPRRLRAS) is disordered. Over residues 123 to 137 (RSRRSKFRPRRLRAS) the composition is skewed to basic residues.

The protein belongs to the eukaryotic ribosomal protein eL32 family.

The chain is Large ribosomal subunit protein eL32 (rpl32) from Trichoderma harzianum (Hypocrea lixii).